The primary structure comprises 184 residues: MKKQDISVKTVVAIGIGAAVFVILGRFVVIPTGFPNTNIETSYAFLALISAIFGPFAGLMTGLVGHAIKDFTTYGSAWWSWVICSGIIGCLYGWIGLKLNLSSGRFSRKSMVYFNIGQIIANIICWALIAPTLDILIYNEPANKVYTQGVISAVLNIISVGIIGTILLKAYASSQIKKGSLRKE.

Helical transmembrane passes span 11-31 (VVAI…VVIP), 44-64 (AFLA…TGLV), 77-97 (AWWS…WIGL), 116-136 (IGQI…LDIL), and 148-168 (QGVI…TILL).

Belongs to the UPF0397 family.

The protein localises to the cell membrane. The chain is UPF0397 protein SAOUHSC_03020 from Staphylococcus aureus (strain NCTC 8325 / PS 47).